The sequence spans 209 residues: Orotate phosphoribosyltransferase (209 aa).

Residues arginine 96, lysine 100, histidine 102, and 122–130 (EDLISTGGS) contribute to the 5-phospho-alpha-D-ribose 1-diphosphate site. Position 126 (serine 126) interacts with orotate.

The protein belongs to the purine/pyrimidine phosphoribosyltransferase family. PyrE subfamily. As to quaternary structure, homodimer. Mg(2+) serves as cofactor.

The catalysed reaction is orotidine 5'-phosphate + diphosphate = orotate + 5-phospho-alpha-D-ribose 1-diphosphate. The protein operates within pyrimidine metabolism; UMP biosynthesis via de novo pathway; UMP from orotate: step 1/2. Its function is as follows. Catalyzes the transfer of a ribosyl phosphate group from 5-phosphoribose 1-diphosphate to orotate, leading to the formation of orotidine monophosphate (OMP). This Streptococcus pyogenes serotype M1 protein is Orotate phosphoribosyltransferase.